The sequence spans 539 residues: Phosphoenolpyruvate carboxykinase (ATP) (539 aa).

Positions 64, 206, and 212 each coordinate substrate. Residues Lys212, His231, and 247–255 (GLSGTGKTT) each bind ATP. Lys212 and His231 together coordinate Mn(2+). Asp268 contacts Mn(2+). Residues Glu296, Arg332, 448–449 (RI), and Thr454 each bind ATP. Arg332 contacts substrate.

This sequence belongs to the phosphoenolpyruvate carboxykinase (ATP) family. Monomer. It depends on Mn(2+) as a cofactor.

It localises to the cytoplasm. The enzyme catalyses oxaloacetate + ATP = phosphoenolpyruvate + ADP + CO2. Its pathway is carbohydrate biosynthesis; gluconeogenesis. Involved in the gluconeogenesis. Catalyzes the conversion of oxaloacetate (OAA) to phosphoenolpyruvate (PEP) through direct phosphoryl transfer between the nucleoside triphosphate and OAA. The polypeptide is Phosphoenolpyruvate carboxykinase (ATP) (Hamiltonella defensa subsp. Acyrthosiphon pisum (strain 5AT)).